The chain runs to 768 residues: Transferrin receptor protein 1 (768 aa).

At 1-68 the chain is on the cytoplasmic side; that stretch reads MMDQARSAFS…VAKPKRLNGY (68 aa). Residues 1–70 are mediates interaction with SH3BP4; sequence MMDQARSAFS…KPKRLNGYVC (70 aa). S10 and S19 each carry phosphoserine. Y20 carries the phosphotyrosine modification. An Endocytosis signal motif is present at residues 20–23; that stretch reads YTRF. A Phosphothreonine modification is found at T21. At S24 the chain carries Phosphoserine. The Stop-transfer sequence signature appears at 61 to 64; sequence KPKR. The helical transmembrane segment at 69–89 threads the bilayer; it reads VCYGIIAVITFFLIGFMIGYL. C70 carries S-palmitoyl cysteine lipidation. The Extracellular segment spans residues 90–768; the sequence is AYCKRVESKT…GDIWDIDNEF (679 aa). In terms of domain architecture, PA spans 231–321; that stretch reads SKATTVTGKL…GTGDPYTPGF (91 aa). Residues N259 and N325 are each glycosylated (N-linked (GlcNAc...) asparagine). Residues 577-768 form a ligand-binding region; that stretch reads TMDTYDVLSK…GDIWDIDNEF (192 aa). Residues 654 to 656 carry the Cell attachment site motif; sequence RGD. N-linked (GlcNAc...) asparagine glycosylation is found at N730 and N735.

Belongs to the peptidase M28 family. M28B subfamily. Homodimer; disulfide-linked. Binds one transferrin or HFE molecule per subunit. Interacts with SH3BP4. Interacts with SH3BP3. Interacts with STEAP3; facilitates TFRC endocytosis in erythroid precursor cells. In terms of processing, stearoylated by ZDHHC6 which inhibits TFRC-mediated activation of the JNK pathway and promotes mitochondrial fragmentation. Stearoylation does not affect iron uptake.

The protein resides in the cell membrane. It localises to the melanosome. Cellular uptake of iron occurs via receptor-mediated endocytosis of ligand-occupied transferrin receptor into specialized endosomes. Endosomal acidification leads to iron release. The apotransferrin-receptor complex is then recycled to the cell surface with a return to neutral pH and the concomitant loss of affinity of apotransferrin for its receptor. Transferrin receptor is necessary for development of erythrocytes and the nervous system. Positively regulates T and B cell proliferation through iron uptake. Acts as a lipid sensor that regulates mitochondrial fusion by regulating activation of the JNK pathway. When dietary levels of stearate (C18:0) are low, promotes activation of the JNK pathway, resulting in HUWE1-mediated ubiquitination and subsequent degradation of the mitofusin MFN2 and inhibition of mitochondrial fusion. When dietary levels of stearate (C18:0) are high, TFRC stearoylation inhibits activation of the JNK pathway and thus degradation of the mitofusin MFN2. Mediates uptake of NICOL1 into fibroblasts where it may regulate extracellular matrix production. This chain is Transferrin receptor protein 1 (TFRC), found in Sus scrofa (Pig).